A 366-amino-acid polypeptide reads, in one-letter code: 3-dehydroquinate synthase (366 aa).

NAD(+) is bound by residues 75–80, 109–113, 133–134, K146, K155, and 173–176; these read DGEQYK, GVIGD, TT, and CLST. Zn(2+) is bound by residues E188, H251, and H268.

Belongs to the sugar phosphate cyclases superfamily. Dehydroquinate synthase family. Requires NAD(+) as cofactor. The cofactor is Co(2+). It depends on Zn(2+) as a cofactor.

Its subcellular location is the cytoplasm. The enzyme catalyses 7-phospho-2-dehydro-3-deoxy-D-arabino-heptonate = 3-dehydroquinate + phosphate. It functions in the pathway metabolic intermediate biosynthesis; chorismate biosynthesis; chorismate from D-erythrose 4-phosphate and phosphoenolpyruvate: step 2/7. In terms of biological role, catalyzes the conversion of 3-deoxy-D-arabino-heptulosonate 7-phosphate (DAHP) to dehydroquinate (DHQ). This chain is 3-dehydroquinate synthase, found in Vibrio parahaemolyticus serotype O3:K6 (strain RIMD 2210633).